We begin with the raw amino-acid sequence, 173 residues long: RNA pyrophosphohydrolase (173 aa).

In terms of domain architecture, Nudix hydrolase spans 6–149; that stretch reads GFRANVGIII…KRDVYRKVMK (144 aa). A Nudix box motif is present at residues 38 to 59; sequence GGVDDGESAEEAMYRELYEEVG.

Belongs to the Nudix hydrolase family. RppH subfamily. A divalent metal cation is required as a cofactor.

Its function is as follows. Accelerates the degradation of transcripts by removing pyrophosphate from the 5'-end of triphosphorylated RNA, leading to a more labile monophosphorylated state that can stimulate subsequent ribonuclease cleavage. This Shewanella pealeana (strain ATCC 700345 / ANG-SQ1) protein is RNA pyrophosphohydrolase.